The sequence spans 195 residues: Translation initiation factor IF-3 (195 aa).

Residues 158-195 form a disordered region; it reads EQSEVQQRPKREGRNMIMFLSPRKTPLIKKEEDAKENN. Positions 185–195 are enriched in basic and acidic residues; the sequence is IKKEEDAKENN.

It belongs to the IF-3 family. As to quaternary structure, monomer.

Its subcellular location is the cytoplasm. In terms of biological role, IF-3 binds to the 30S ribosomal subunit and shifts the equilibrium between 70S ribosomes and their 50S and 30S subunits in favor of the free subunits, thus enhancing the availability of 30S subunits on which protein synthesis initiation begins. The sequence is that of Translation initiation factor IF-3 from Prochlorococcus marinus (strain MIT 9515).